The following is a 321-amino-acid chain: Opticin (321 aa).

The first 19 residues, 1–19, serve as a signal peptide directing secretion; the sequence is MKLLALLSLLILMLQEART. Y61 bears the Sulfotyrosine mark. Residues 105 to 142 enclose the LRRNT domain; sequence LLAAPANHGLPTCLICVCLGSSVYCDDADLENIPPLPQ. LRR repeat units follow at residues 143–164, 167–188, 191–212, 237–258, 259–279, and 289–309; these read TTAY…DFKG, KLKR…ALRL, ALRD…PTSI, KLQF…LPLS, LRSL…AFCD, and PLED…PSAY. The cysteines at positions 278 and 311 are disulfide-linked. N301 carries N-linked (GlcNAc...) asparagine glycosylation.

This sequence belongs to the small leucine-rich proteoglycan (SLRP) family. SLRP class III subfamily. In terms of assembly, homodimer. In terms of processing, O-glycosylated (sialylated oligosaccharides). Post-translationally, sulfated on tyrosine residues. Proteolytically cleaved by MMP1, MMP2, MMP3, MMP7, MMP8, MMP9, ADAMTS4, and ADAMTS5. Proteolytically cleaved by MMP13.

It localises to the secreted. Its subcellular location is the extracellular space. The protein resides in the extracellular matrix. Inhibits angiogenesis in the vitreous humor of the eye, and therefore represses neovascularization. Binds collagen fibrils. May be involved in collagen fiber organization via regulation of other members of the small leucine-rich repeat proteoglycan superfamily. The chain is Opticin (OPTC) from Bos taurus (Bovine).